Consider the following 100-residue polypeptide: Small ribosomal subunit protein uS14c (100 aa).

The protein belongs to the universal ribosomal protein uS14 family. Part of the 30S ribosomal subunit.

The protein resides in the plastid. Its subcellular location is the chloroplast. In terms of biological role, binds 16S rRNA, required for the assembly of 30S particles. The polypeptide is Small ribosomal subunit protein uS14c (Rhodomonas salina (Cryptomonas salina)).